The primary structure comprises 208 residues: MKNLLCAVMLTSPLLYSTAVFADDAQQLRNTLVNTASLKTDFKQTVTDVNKKVIQTGSGILALAHPNQFYWHLTSPDESQIVADGKDLWIYNPFAEEVVIMDFAEAINASPIALLVHRDDTTWSQYSVTKKQDCYDIRPKAIDSGIVTVSVCFKNSQLTKFNVLDDKGNLSQFDLSNQKVITTEDKALFKFVLPENVDIDDQRLKTLN.

The signal sequence occupies residues 1–22; sequence MKNLLCAVMLTSPLLYSTAVFA.

It belongs to the LolA family. In terms of assembly, monomer.

It is found in the periplasm. Functionally, participates in the translocation of lipoproteins from the inner membrane to the outer membrane. Only forms a complex with a lipoprotein if the residue after the N-terminal Cys is not an aspartate (The Asp acts as a targeting signal to indicate that the lipoprotein should stay in the inner membrane). The sequence is that of Outer-membrane lipoprotein carrier protein from Shewanella sp. (strain W3-18-1).